A 159-amino-acid chain; its full sequence is Ribonuclease H (159 aa).

Residues 1-145 (MTHIRAIYTD…CDLIARRLSR (145 aa)) enclose the RNase H type-1 domain. Asp-10, Glu-49, Asp-74, and Asp-137 together coordinate Mg(2+).

It belongs to the RNase H family. In terms of assembly, monomer. Mg(2+) is required as a cofactor.

The protein localises to the cytoplasm. It carries out the reaction Endonucleolytic cleavage to 5'-phosphomonoester.. Functionally, endonuclease that specifically degrades the RNA of RNA-DNA hybrids. This chain is Ribonuclease H, found in Thermosynechococcus vestitus (strain NIES-2133 / IAM M-273 / BP-1).